A 370-amino-acid chain; its full sequence is Spermidine/putrescine import ATP-binding protein PotA (370 aa).

Residues 6-236 enclose the ABC transporter domain; sequence IELHQVTKRY…PINHFVADFI (231 aa). 38–45 is an ATP binding site; that stretch reads GPSGCGKT.

The protein belongs to the ABC transporter superfamily. Spermidine/putrescine importer (TC 3.A.1.11.1) family. In terms of assembly, the complex is composed of two ATP-binding proteins (PotA), two transmembrane proteins (PotB and PotC) and a solute-binding protein (PotD).

It localises to the cell membrane. It catalyses the reaction ATP + H2O + polyamine-[polyamine-binding protein]Side 1 = ADP + phosphate + polyamineSide 2 + [polyamine-binding protein]Side 1.. Part of the ABC transporter complex PotABCD involved in spermidine/putrescine import. Responsible for energy coupling to the transport system. In Levilactobacillus brevis (strain ATCC 367 / BCRC 12310 / CIP 105137 / JCM 1170 / LMG 11437 / NCIMB 947 / NCTC 947) (Lactobacillus brevis), this protein is Spermidine/putrescine import ATP-binding protein PotA.